Here is a 303-residue protein sequence, read N- to C-terminus: Serine/threonine-protein phosphatase PP-X homolog 1 (303 aa).

4 residues coordinate Mn(2+): aspartate 51, histidine 53, aspartate 79, and asparagine 111. The active-site Proton donor is the histidine 112. The Mn(2+) site is built by histidine 161 and histidine 235.

Belongs to the PPP phosphatase family. PP-4 (PP-X) subfamily. Mn(2+) is required as a cofactor.

It carries out the reaction O-phospho-L-seryl-[protein] + H2O = L-seryl-[protein] + phosphate. The catalysed reaction is O-phospho-L-threonyl-[protein] + H2O = L-threonyl-[protein] + phosphate. This is Serine/threonine-protein phosphatase PP-X homolog 1 (Ppx1) from Paramecium tetraurelia.